Consider the following 128-residue polypeptide: MAFSFPDHFRFADSHEYAFADDSLVRIGISEFAVDQLGDIVFVDLPEEGTAIAKGESFGSVESVKAVEDMYAPVSGEIVHRNNSVLASPEELQNDPHGEGWLLIIRPDNPAQLKELMDSETYSKKISA.

The Lipoyl-binding domain occupies 24–106; sequence LVRIGISEFA…HGEGWLLIIR (83 aa). K65 is subject to N6-lipoyllysine.

It belongs to the GcvH family. In terms of assembly, the glycine cleavage system is composed of four proteins: P, T, L and H. Requires (R)-lipoate as cofactor.

The glycine cleavage system catalyzes the degradation of glycine. The H protein shuttles the methylamine group of glycine from the P protein to the T protein. The protein is Glycine cleavage system H protein of Prochlorococcus marinus (strain NATL2A).